Consider the following 167-residue polypeptide: Claudin domain-containing protein 2 (167 aa).

The next 4 helical transmembrane spans lie at 13–32 (LLNL…NYWT), 61–81 (VSAA…GIGI), 96–116 (TIVL…VYTS), and 130–150 (YFFG…FLLA).

Belongs to the PMP-22/EMP/MP20 family.

The protein resides in the membrane. In Mus musculus (Mouse), this protein is Claudin domain-containing protein 2 (Cldnd2).